Consider the following 149-residue polypeptide: Calmodulin (149 aa).

Ala-2 carries the N-acetylalanine modification. EF-hand domains lie at 8 to 43 (EQIA…LGQN), 44 to 79 (PTEA…KMKD), 81 to 116 (DTEE…LGEK), and 117 to 149 (LTDE…MMAK). Residues Asp-21, Asp-23, Asp-25, Thr-27, Glu-32, Asp-57, Asp-59, Asn-61, Thr-63, Glu-68, Asp-94, Asp-96, Asn-98, and Glu-105 each contribute to the Ca(2+) site. N6,N6,N6-trimethyllysine is present on Lys-116. Asp-130, Asp-132, Asp-134, His-136, and Glu-141 together coordinate Ca(2+).

It belongs to the calmodulin family.

Calmodulin mediates the control of a large number of enzymes, ion channels and other proteins by Ca(2+). Among the enzymes to be stimulated by the calmodulin-Ca(2+) complex are a number of protein kinases and phosphatases. In Stylonychia lemnae (Ciliate), this protein is Calmodulin.